Here is a 226-residue protein sequence, read N- to C-terminus: UPF0111 protein HI_1603 (226 aa).

The protein belongs to the UPF0111 family.

In Haemophilus influenzae (strain ATCC 51907 / DSM 11121 / KW20 / Rd), this protein is UPF0111 protein HI_1603.